The following is a 128-amino-acid chain: Holo-[acyl-carrier-protein] synthase (128 aa).

Mg(2+) is bound by residues aspartate 10 and glutamate 59.

This sequence belongs to the P-Pant transferase superfamily. AcpS family. Mg(2+) serves as cofactor.

The protein localises to the cytoplasm. The catalysed reaction is apo-[ACP] + CoA = holo-[ACP] + adenosine 3',5'-bisphosphate + H(+). Its function is as follows. Transfers the 4'-phosphopantetheine moiety from coenzyme A to a Ser of acyl-carrier-protein. In Syntrophotalea carbinolica (strain DSM 2380 / NBRC 103641 / GraBd1) (Pelobacter carbinolicus), this protein is Holo-[acyl-carrier-protein] synthase.